The primary structure comprises 155 residues: Ribosomal RNA large subunit methyltransferase H (155 aa).

S-adenosyl-L-methionine is bound by residues glycine 104 and 123 to 128 (LSAMTF).

It belongs to the RNA methyltransferase RlmH family. Homodimer.

Its subcellular location is the cytoplasm. It catalyses the reaction pseudouridine(1915) in 23S rRNA + S-adenosyl-L-methionine = N(3)-methylpseudouridine(1915) in 23S rRNA + S-adenosyl-L-homocysteine + H(+). Its function is as follows. Specifically methylates the pseudouridine at position 1915 (m3Psi1915) in 23S rRNA. This Oleidesulfovibrio alaskensis (strain ATCC BAA-1058 / DSM 17464 / G20) (Desulfovibrio alaskensis) protein is Ribosomal RNA large subunit methyltransferase H.